A 200-amino-acid polypeptide reads, in one-letter code: ATP-dependent Clp protease proteolytic subunit 3 (200 aa).

Ser101 (nucleophile) is an active-site residue. Residue His126 is part of the active site.

Belongs to the peptidase S14 family. As to quaternary structure, fourteen ClpP subunits assemble into 2 heptameric rings which stack back to back to give a disk-like structure with a central cavity, resembling the structure of eukaryotic proteasomes.

The protein resides in the cytoplasm. It catalyses the reaction Hydrolysis of proteins to small peptides in the presence of ATP and magnesium. alpha-casein is the usual test substrate. In the absence of ATP, only oligopeptides shorter than five residues are hydrolyzed (such as succinyl-Leu-Tyr-|-NHMec, and Leu-Tyr-Leu-|-Tyr-Trp, in which cleavage of the -Tyr-|-Leu- and -Tyr-|-Trp bonds also occurs).. Functionally, cleaves peptides in various proteins in a process that requires ATP hydrolysis. Has a chymotrypsin-like activity. Plays a major role in the degradation of misfolded proteins. In Synechococcus sp. (strain CC9605), this protein is ATP-dependent Clp protease proteolytic subunit 3.